The following is a 732-amino-acid chain: Elongation factor 2 (732 aa).

Positions 19-260 (ERIRNMGIAA…MVVKHLPNPL (242 aa)) constitute a tr-type G domain. GTP is bound by residues 28-35 (AHIDHGKT), 94-98 (DTPGH), and 148-151 (NKVD). The residue at position 597 (H597) is a Diphthamide.

Belongs to the TRAFAC class translation factor GTPase superfamily. Classic translation factor GTPase family. EF-G/EF-2 subfamily.

The protein resides in the cytoplasm. In terms of biological role, catalyzes the GTP-dependent ribosomal translocation step during translation elongation. During this step, the ribosome changes from the pre-translocational (PRE) to the post-translocational (POST) state as the newly formed A-site-bound peptidyl-tRNA and P-site-bound deacylated tRNA move to the P and E sites, respectively. Catalyzes the coordinated movement of the two tRNA molecules, the mRNA and conformational changes in the ribosome. This Thermococcus kodakarensis (strain ATCC BAA-918 / JCM 12380 / KOD1) (Pyrococcus kodakaraensis (strain KOD1)) protein is Elongation factor 2.